The following is a 216-amino-acid chain: MYLKIPCNSIYHQFQPLFRARTVHKVRSLGLNGFYRKYHGFNSLRFVRVLQEAGIDDKKSETLMRLISNVYSDMHEKISDFSVTKEQQDRVMYQQKVDFAHLRSELQSIERQEMVALHSQVEQLFSDVERLKTSFRDQLNNSTSEARLQLNIDRLNHYDETASQDLKLRELSAEIDTEMSNFRTQLASFKTQTLQWVFGIVTGSGALLLAYVRLII.

The stretch at 111 to 133 forms a coiled coil; sequence RQEMVALHSQVEQLFSDVERLKT. The helical transmembrane segment at 193 to 215 threads the bilayer; that stretch reads TLQWVFGIVTGSGALLLAYVRLI.

It belongs to the CCDC90 family.

The protein localises to the mitochondrion. The protein resides in the membrane. The chain is Protein fmp32, mitochondrial (fmp32) from Schizosaccharomyces pombe (strain 972 / ATCC 24843) (Fission yeast).